The sequence spans 406 residues: Tyrosine--tRNA ligase (406 aa).

Tyr-35 contributes to the L-tyrosine binding site. The short motif at 40–49 is the 'HIGH' region element; the sequence is PTADSLHIGH. L-tyrosine-binding residues include Tyr-168 and Gln-172. The 'KMSKS' region motif lies at 228–232; it reads KMGKT. Residue Lys-231 coordinates ATP. Positions 340 to 406 constitute an S4 RNA-binding domain; the sequence is CSVVELLVDI…KKNYNRIIIK (67 aa).

It belongs to the class-I aminoacyl-tRNA synthetase family. TyrS type 1 subfamily. As to quaternary structure, homodimer.

Its subcellular location is the cytoplasm. It catalyses the reaction tRNA(Tyr) + L-tyrosine + ATP = L-tyrosyl-tRNA(Tyr) + AMP + diphosphate + H(+). In terms of biological role, catalyzes the attachment of tyrosine to tRNA(Tyr) in a two-step reaction: tyrosine is first activated by ATP to form Tyr-AMP and then transferred to the acceptor end of tRNA(Tyr). This chain is Tyrosine--tRNA ligase, found in Clostridium kluyveri (strain NBRC 12016).